The following is a 542-amino-acid chain: Keratin, type II cytoskeletal 75 (542 aa).

The span at 1–26 (MSRQSTVTFHSGSRRGFSTASATTPT) shows a compositional bias: polar residues. The disordered stretch occupies residues 1-44 (MSRQSTVTFHSGSRRGFSTASATTPTAGRSRFSSVSVARSSGNS). The interval 1-139 (MSRQSTVTFH…DPTIQRVRKE (139 aa)) is head. Over residues 27–42 (AGRSRFSSVSVARSSG) the composition is skewed to low complexity. Residues 140–175 (EREQIKTLNNKFASFIDKVRFLEQQNKVLETKWNLL) are coil 1A. In terms of domain architecture, IF rod spans 140–453 (EREQIKTLNN…KLLEGEECRL (314 aa)). The tract at residues 176–194 (QEQGSRTVRQNLEPFFDAY) is linker 1. The tract at residues 195 to 287 (VNDLRRQLDS…VYEAELSQMQ (93 aa)) is coil 1B. Residues 288 to 310 (NQVSDTSVVLSMDNNRSLDLDSI) form a linker 12 region. The interval 311 to 449 (IAEVKAQYED…ATYRKLLEGE (139 aa)) is coil 2. The tail stretch occupies residues 450 to 542 (ECRLSGEGVS…TSSSRKSYKH (93 aa)). The tract at residues 514–542 (TSSSRGPVGSGSSIKFVSSTSSSRKSYKH) is disordered.

This sequence belongs to the intermediate filament family. As to quaternary structure, heterodimer of a type I and a type II keratin. May associate with KRT17.

Functionally, plays a central role in hair and nail formation. Essential component of keratin intermediate filaments in the companion layer of the hair follicle. The chain is Keratin, type II cytoskeletal 75 (Krt75) from Rattus norvegicus (Rat).